The chain runs to 685 residues: Translation initiation factor IF-2 (685 aa).

Residues 185-354 (KRPPVVTVMG…LLTAEMQELK (170 aa)) form the tr-type G domain. Residues 194 to 201 (GHVDHGKT) are G1. GTP is bound at residue 194 to 201 (GHVDHGKT). Residues 219 to 223 (GITQH) form a G2 region. The tract at residues 240-243 (DTPG) is G3. GTP contacts are provided by residues 240-244 (DTPGH) and 294-297 (NKMD). The segment at 294-297 (NKMD) is G4. A G5 region spans residues 330 to 332 (SAH).

The protein belongs to the TRAFAC class translation factor GTPase superfamily. Classic translation factor GTPase family. IF-2 subfamily.

Its subcellular location is the cytoplasm. Functionally, one of the essential components for the initiation of protein synthesis. Protects formylmethionyl-tRNA from spontaneous hydrolysis and promotes its binding to the 30S ribosomal subunits. Also involved in the hydrolysis of GTP during the formation of the 70S ribosomal complex. This Clostridium tetani (strain Massachusetts / E88) protein is Translation initiation factor IF-2.